We begin with the raw amino-acid sequence, 123 residues long: Small ribosomal subunit protein uS12 (123 aa).

A 3-methylthioaspartic acid modification is found at D89.

This sequence belongs to the universal ribosomal protein uS12 family. Part of the 30S ribosomal subunit. Contacts proteins S8 and S17. May interact with IF1 in the 30S initiation complex.

With S4 and S5 plays an important role in translational accuracy. Its function is as follows. Interacts with and stabilizes bases of the 16S rRNA that are involved in tRNA selection in the A site and with the mRNA backbone. Located at the interface of the 30S and 50S subunits, it traverses the body of the 30S subunit contacting proteins on the other side and probably holding the rRNA structure together. The combined cluster of proteins S8, S12 and S17 appears to hold together the shoulder and platform of the 30S subunit. The sequence is that of Small ribosomal subunit protein uS12 from Anaeromyxobacter sp. (strain Fw109-5).